The sequence spans 76 residues: UPF0291 protein BA_1897/GBAA_1897/BAS1759 (76 aa).

This sequence belongs to the UPF0291 family.

It localises to the cytoplasm. The polypeptide is UPF0291 protein BA_1897/GBAA_1897/BAS1759 (Bacillus anthracis).